A 506-amino-acid polypeptide reads, in one-letter code: Ribose import ATP-binding protein RbsA 2 (506 aa).

ABC transporter domains follow at residues 5–241 (LRLS…VGRR) and 254–498 (ADAP…TAGT). Residue 37-44 (GENGAGKS) coordinates ATP.

It belongs to the ABC transporter superfamily. Ribose importer (TC 3.A.1.2.1) family. The complex is composed of an ATP-binding protein (RbsA), two transmembrane proteins (RbsC) and a solute-binding protein (RbsB).

It is found in the cell inner membrane. The catalysed reaction is D-ribose(out) + ATP + H2O = D-ribose(in) + ADP + phosphate + H(+). Functionally, part of the ABC transporter complex RbsABC involved in ribose import. Responsible for energy coupling to the transport system. This is Ribose import ATP-binding protein RbsA 2 from Burkholderia cenocepacia (strain HI2424).